A 457-amino-acid chain; its full sequence is Allantoinase (457 aa).

Positions 58, 60, 145, 181, 237, and 310 each coordinate Zn(2+). Residue Lys-145 is modified to N6-carboxylysine.

Belongs to the metallo-dependent hydrolases superfamily. Allantoinase family. Homotetramer. It depends on Zn(2+) as a cofactor. In terms of processing, carboxylation allows a single lysine to coordinate two zinc ions.

The enzyme catalyses (S)-allantoin + H2O = allantoate + H(+). The protein operates within nitrogen metabolism; (S)-allantoin degradation; allantoate from (S)-allantoin: step 1/1. Its function is as follows. Catalyzes the conversion of allantoin (5-ureidohydantoin) to allantoic acid by hydrolytic cleavage of the five-member hydantoin ring. This is Allantoinase from Solibacter usitatus (strain Ellin6076).